The sequence spans 58 residues: Small ribosomal subunit protein bS21 (58 aa).

Positions 32–42 (IRKREHYEKPS) are enriched in basic and acidic residues. The tract at residues 32-58 (IRKREHYEKPSVKRKKKSEAARKRKFK) is disordered. The span at 43–58 (VKRKKKSEAARKRKFK) shows a compositional bias: basic residues.

This sequence belongs to the bacterial ribosomal protein bS21 family.

The sequence is that of Small ribosomal subunit protein bS21 from Lachnoclostridium phytofermentans (strain ATCC 700394 / DSM 18823 / ISDg) (Clostridium phytofermentans).